The sequence spans 342 residues: Keratin-associated protein 29-1 (342 aa).

A run of 5 repeats spans residues 5–9 (CCPEN), 91–95 (CCASD), 239–243 (CCVPP), 309–313 (CCVTG), and 324–328 (CCPPT). Residues 5–328 (CCPENPTAVP…SSGPGCCPPT (324 aa)) form a 5 X 5 AA repeats of C-C-X(3) region.

Belongs to the KRTAP type 10 family.

The sequence is that of Keratin-associated protein 29-1 (Krtap29-1) from Mus musculus (Mouse).